The sequence spans 511 residues: Glycerol kinase (511 aa).

Threonine 11 serves as a coordination point for ADP. 3 residues coordinate ATP: threonine 11, serine 12, and serine 13. Threonine 11 contacts sn-glycerol 3-phosphate. Arginine 15 serves as a coordination point for ADP. Residues arginine 81, glutamate 82, tyrosine 133, and aspartate 242 each coordinate sn-glycerol 3-phosphate. Residues arginine 81, glutamate 82, tyrosine 133, aspartate 242, and glutamine 243 each contribute to the glycerol site. Positions 264 and 321 each coordinate ADP. 4 residues coordinate ATP: threonine 264, glycine 321, glutamine 325, and glycine 426. ADP is bound by residues glycine 426 and asparagine 430.

Belongs to the FGGY kinase family.

It carries out the reaction glycerol + ATP = sn-glycerol 3-phosphate + ADP + H(+). It functions in the pathway polyol metabolism; glycerol degradation via glycerol kinase pathway; sn-glycerol 3-phosphate from glycerol: step 1/1. With respect to regulation, inhibited by fructose 1,6-bisphosphate (FBP). Its function is as follows. Key enzyme in the regulation of glycerol uptake and metabolism. Catalyzes the phosphorylation of glycerol to yield sn-glycerol 3-phosphate. The sequence is that of Glycerol kinase from Verminephrobacter eiseniae (strain EF01-2).